The chain runs to 273 residues: Shikimate dehydrogenase (NADP(+)) (273 aa).

Shikimate contacts are provided by residues 15–17 (SLS) and T62. K66 functions as the Proton acceptor in the catalytic mechanism. E78 provides a ligand contact to NADP(+). Shikimate is bound by residues N87 and D102. NADP(+)-binding positions include 126–130 (GAGGA), 150–155 (NRTIEK), and I217. Position 219 (Y219) interacts with shikimate. G240 lines the NADP(+) pocket.

The protein belongs to the shikimate dehydrogenase family. In terms of assembly, homodimer.

The enzyme catalyses shikimate + NADP(+) = 3-dehydroshikimate + NADPH + H(+). The protein operates within metabolic intermediate biosynthesis; chorismate biosynthesis; chorismate from D-erythrose 4-phosphate and phosphoenolpyruvate: step 4/7. Functionally, involved in the biosynthesis of the chorismate, which leads to the biosynthesis of aromatic amino acids. Catalyzes the reversible NADPH linked reduction of 3-dehydroshikimate (DHSA) to yield shikimate (SA). In Nitrosopumilus maritimus (strain SCM1), this protein is Shikimate dehydrogenase (NADP(+)).